Consider the following 156-residue polypeptide: Large ribosomal subunit protein bL9 (156 aa).

The protein belongs to the bacterial ribosomal protein bL9 family.

Functionally, binds to the 23S rRNA. In Treponema pallidum (strain Nichols), this protein is Large ribosomal subunit protein bL9.